A 201-amino-acid chain; its full sequence is Large ribosomal subunit protein uL4 (201 aa).

The disordered stretch occupies residues 39-72 (KRQGTSAQKSRSEVIGSGKKPWRQKGTGRARAGS).

This sequence belongs to the universal ribosomal protein uL4 family. In terms of assembly, part of the 50S ribosomal subunit.

Functionally, one of the primary rRNA binding proteins, this protein initially binds near the 5'-end of the 23S rRNA. It is important during the early stages of 50S assembly. It makes multiple contacts with different domains of the 23S rRNA in the assembled 50S subunit and ribosome. In terms of biological role, forms part of the polypeptide exit tunnel. In Wigglesworthia glossinidia brevipalpis, this protein is Large ribosomal subunit protein uL4.